The following is a 248-amino-acid chain: 1-(5-phosphoribosyl)-5-[(5-phosphoribosylamino)methylideneamino] imidazole-4-carboxamide isomerase (248 aa).

Aspartate 8 acts as the Proton acceptor in catalysis. Aspartate 129 serves as the catalytic Proton donor.

The protein belongs to the HisA/HisF family.

The protein localises to the cytoplasm. It carries out the reaction 1-(5-phospho-beta-D-ribosyl)-5-[(5-phospho-beta-D-ribosylamino)methylideneamino]imidazole-4-carboxamide = 5-[(5-phospho-1-deoxy-D-ribulos-1-ylimino)methylamino]-1-(5-phospho-beta-D-ribosyl)imidazole-4-carboxamide. Its pathway is amino-acid biosynthesis; L-histidine biosynthesis; L-histidine from 5-phospho-alpha-D-ribose 1-diphosphate: step 4/9. The polypeptide is 1-(5-phosphoribosyl)-5-[(5-phosphoribosylamino)methylideneamino] imidazole-4-carboxamide isomerase (Rhizobium etli (strain CIAT 652)).